The sequence spans 1735 residues: Cadherin-AgCad1 (1735 aa).

The N-terminal stretch at 1–30 (MKCVASKFNMWLHLGWLLGLLLVLLPLVRC) is a signal peptide. Residues 31–1574 (QGWGEPRFET…ALTEADETLQ (1544 aa)) lie on the Extracellular side of the membrane. The extracellular domain (EC) stretch occupies residues 166 to 1456 (VTDCLFNVYH…KVYIVSESNR (1291 aa)). 11 Cadherin domains span residues 171–273 (FNVY…PPIF), 280–378 (ERIM…IPEI), 379–498 (YMKP…VPKF), 499–620 (GRDE…PPQI), 621–757 (TLPR…APYF), 767–866 (SVKE…QPYH), 879–983 (EKIP…TPKL), 985–1109 (ELAA…TPSI), 1136–1235 (GSPL…EPTF), 1255–1350 (AEDP…PPVF), and 1351–1461 (QQRL…TFVF). 2 consecutive short sequence motifs (toxin-binding receptor motif) follow at residues 1344 to 1350 (NDNPPVF) and 1446 to 1456 (AKVYIVSESNR). Residues 1358-1569 (GITTNDRVPK…PLATEALTEA (212 aa)) are CR11-MPED, increases toxicity of activated Cry4B toxin, peptide alone is not toxic. The interval 1457–1569 (VTFVFLNSVE…PLATEALTEA (113 aa)) is membrane-proximal EC domain (MPED). The chain crosses the membrane as a helical span at residues 1575–1595 (IILIVVSAALAVLCVILFVAF). Residues 1596–1735 (FIKIRSLNRQ…ETDDELSHRF (140 aa)) lie on the Cytoplasmic side of the membrane. The segment covering 1701-1719 (SLNPMANGTDKSNDGAPTS) has biased composition (polar residues). Positions 1701-1735 (SLNPMANGTDKSNDGAPTSNHKKLDETDDELSHRF) are disordered. The span at 1722-1735 (KKLDETDDELSHRF) shows a compositional bias: basic and acidic residues.

In terms of tissue distribution, larval midgut (at protein level).

Its subcellular location is the apical cell membrane. It localises to the cell projection. The protein localises to the microvillus membrane. Functionally, cadherins are calcium-dependent cell adhesion proteins. They preferentially interact with themselves in a homophilic manner in connecting cells. Its function is as follows. (Microbial infection) Binds to and is probably the functional receptor for B.thuringiensis subsp. israelensis (Bti) insecticidal toxin Cry4B. Trichoplusia ni insect cells stably transfected with this protein become suspectible to Cry4B; cells undergo oncosis, they bleb and ruffle after 20-40 minutes, swell after 40-60 minutes and lyse after 90 minutes. Following toxin treatment in the T.in insect system levels of intracellular 3',5'-cyclic AMP (cAMP) rise 12.5-fold; EDTA but not EGTA pretreatment prevents cAMP increase. Inorganic phosphate also rises 3.4-fold after toxin treatment. This chain is Cadherin-AgCad1, found in Anopheles gambiae (African malaria mosquito).